The sequence spans 150 residues: Large ribosomal subunit protein bL9 (150 aa).

It belongs to the bacterial ribosomal protein bL9 family.

Functionally, binds to the 23S rRNA. This chain is Large ribosomal subunit protein bL9, found in Acidovorax ebreus (strain TPSY) (Diaphorobacter sp. (strain TPSY)).